The primary structure comprises 207 residues: Small ribosomal subunit protein uS4 (207 aa).

Residues D30–D51 form a disordered region. Residues S97–A157 form the S4 RNA-binding domain.

It belongs to the universal ribosomal protein uS4 family. In terms of assembly, part of the 30S ribosomal subunit. Contacts protein S5. The interaction surface between S4 and S5 is involved in control of translational fidelity.

In terms of biological role, one of the primary rRNA binding proteins, it binds directly to 16S rRNA where it nucleates assembly of the body of the 30S subunit. Its function is as follows. With S5 and S12 plays an important role in translational accuracy. This Verminephrobacter eiseniae (strain EF01-2) protein is Small ribosomal subunit protein uS4.